Consider the following 488-residue polypeptide: 3-octaprenyl-4-hydroxybenzoate carboxy-lyase (488 aa).

Residue Asn172 participates in Mn(2+) binding. Prenylated FMN is bound by residues 175–177 (IYR), 189–191 (RWL), and 194–195 (RG). Mn(2+) is bound at residue Glu238. Asp287 serves as the catalytic Proton donor.

Belongs to the UbiD family. Homohexamer. Requires prenylated FMN as cofactor. The cofactor is Mn(2+).

The protein resides in the cell membrane. It carries out the reaction a 4-hydroxy-3-(all-trans-polyprenyl)benzoate + H(+) = a 2-(all-trans-polyprenyl)phenol + CO2. Its pathway is cofactor biosynthesis; ubiquinone biosynthesis. Functionally, catalyzes the decarboxylation of 3-octaprenyl-4-hydroxy benzoate to 2-octaprenylphenol, an intermediate step in ubiquinone biosynthesis. The chain is 3-octaprenyl-4-hydroxybenzoate carboxy-lyase from Halorhodospira halophila (strain DSM 244 / SL1) (Ectothiorhodospira halophila (strain DSM 244 / SL1)).